A 388-amino-acid chain; its full sequence is Chorismate synthase (388 aa).

NADP(+) contacts are provided by Arg-39 and Arg-45. FMN-binding positions include 130-132 (RSS), 251-252 (NA), Gly-296, 311-315 (KPIPT), and Arg-337.

This sequence belongs to the chorismate synthase family. In terms of assembly, homotetramer. Requires FMNH2 as cofactor.

It catalyses the reaction 5-O-(1-carboxyvinyl)-3-phosphoshikimate = chorismate + phosphate. The protein operates within metabolic intermediate biosynthesis; chorismate biosynthesis; chorismate from D-erythrose 4-phosphate and phosphoenolpyruvate: step 7/7. Functionally, catalyzes the anti-1,4-elimination of the C-3 phosphate and the C-6 proR hydrogen from 5-enolpyruvylshikimate-3-phosphate (EPSP) to yield chorismate, which is the branch point compound that serves as the starting substrate for the three terminal pathways of aromatic amino acid biosynthesis. This reaction introduces a second double bond into the aromatic ring system. This chain is Chorismate synthase, found in Streptococcus uberis (strain ATCC BAA-854 / 0140J).